A 634-amino-acid chain; its full sequence is 1-deoxy-D-xylulose-5-phosphate synthase (634 aa).

Thiamine diphosphate contacts are provided by residues His-74 and 115-117; that span reads AHS. Asp-146 is a binding site for Mg(2+). Residues 147 to 148, Asn-176, Tyr-283, and Glu-365 contribute to the thiamine diphosphate site; that span reads GA. Position 176 (Asn-176) interacts with Mg(2+).

It belongs to the transketolase family. DXPS subfamily. Homodimer. Mg(2+) is required as a cofactor. It depends on thiamine diphosphate as a cofactor.

The catalysed reaction is D-glyceraldehyde 3-phosphate + pyruvate + H(+) = 1-deoxy-D-xylulose 5-phosphate + CO2. It functions in the pathway metabolic intermediate biosynthesis; 1-deoxy-D-xylulose 5-phosphate biosynthesis; 1-deoxy-D-xylulose 5-phosphate from D-glyceraldehyde 3-phosphate and pyruvate: step 1/1. Functionally, catalyzes the acyloin condensation reaction between C atoms 2 and 3 of pyruvate and glyceraldehyde 3-phosphate to yield 1-deoxy-D-xylulose-5-phosphate (DXP). The protein is 1-deoxy-D-xylulose-5-phosphate synthase of Burkholderia cenocepacia (strain ATCC BAA-245 / DSM 16553 / LMG 16656 / NCTC 13227 / J2315 / CF5610) (Burkholderia cepacia (strain J2315)).